Reading from the N-terminus, the 589-residue chain is Polypeptide N-acetylgalactosaminyltransferase 4 (589 aa).

The Cytoplasmic segment spans residues 1-11 (MLPRMLKMKTV). The helical; Signal-anchor for type II membrane protein transmembrane segment at 12–31 (GTVLAVIWLFGLAFIYVQST) threads the bilayer. Residues 32–589 (SSSLRPPGRH…WIFEKLDTYE (558 aa)) are Lumenal-facing. The interval 33–73 (SSLRPPGRHPPPLPQLDPLIPQNPPQNDEIRPKKSAPPIPT) is disordered. 5 disulfide bridges follow: cysteine 140–cysteine 369, cysteine 360–cysteine 438, cysteine 471–cysteine 488, cysteine 514–cysteine 531, and cysteine 553–cysteine 571. The interval 150–255 (MQPTTVIITY…QKWLEPLLAR (106 aa)) is catalytic subdomain A. 2 residues coordinate substrate: aspartate 191 and arginine 216. Aspartate 239 serves as a coordination point for Mn(2+). Serine 240 contributes to the substrate binding site. Residue histidine 241 participates in Mn(2+) binding. Residues 315 to 377 (PIRSPTMAGG…PCSRVGHVFR (63 aa)) are catalytic subdomain B. A substrate-binding site is contributed by tryptophan 346. Histidine 374 serves as a coordination point for Mn(2+). Substrate contacts are provided by arginine 377, histidine 380, and tyrosine 382. The 132-residue stretch at 458-589 (TPGKSFQMKI…WIFEKLDTYE (132 aa)) folds into the Ricin B-type lectin domain. A glycan (N-linked (GlcNAc...) asparagine) is linked at asparagine 523.

This sequence belongs to the glycosyltransferase 2 family. GalNAc-T subfamily. The cofactor is Mn(2+).

The protein resides in the golgi apparatus membrane. The enzyme catalyses L-seryl-[protein] + UDP-N-acetyl-alpha-D-galactosamine = a 3-O-[N-acetyl-alpha-D-galactosaminyl]-L-seryl-[protein] + UDP + H(+). It catalyses the reaction L-threonyl-[protein] + UDP-N-acetyl-alpha-D-galactosamine = a 3-O-[N-acetyl-alpha-D-galactosaminyl]-L-threonyl-[protein] + UDP + H(+). Its pathway is protein modification; protein glycosylation. In terms of biological role, catalyzes the initial reaction in O-linked oligosaccharide biosynthesis, the transfer of an N-acetyl-D-galactosamine residue to a serine or threonine residue on the protein receptor. The chain is Polypeptide N-acetylgalactosaminyltransferase 4 (gly-4) from Caenorhabditis elegans.